Reading from the N-terminus, the 31-residue chain is Bacteriocin leucocin-B (31 aa).

Its subcellular location is the secreted. Inhibits a wide spectrum of lactic acid bacteria. This Leuconostoc mesenteroides protein is Bacteriocin leucocin-B.